A 262-amino-acid chain; its full sequence is Putative ankyrin repeat protein R848 (262 aa).

7 ANK repeats span residues Ser8 to His37, Asp38 to Asp67, Cys68 to Ala97, Asp99 to Ala127, Asp128 to Ala157, Asp159 to Ser187, and Asn189 to Thr217.

The sequence is that of Putative ankyrin repeat protein R848 from Acanthamoeba polyphaga (Amoeba).